The sequence spans 332 residues: RNA polymerase principal sigma factor HrdD (332 aa).

Residues 1–25 form a disordered region; it reads MATRAVARRQSATGETADSASSVRA. Residues 10–22 are compositionally biased toward polar residues; that stretch reads QSATGETADSASS. A Polymerase core binding motif is present at residues 124 to 137; that stretch reads DLIQEGNAGLVRAV. A DNA-binding region (H-T-H motif) is located at residues 294 to 313; sequence LTEVGKEHGLTRERIRQIEK.

The protein belongs to the sigma-70 factor family.

In terms of biological role, sigma factors are initiation factors that promote the attachment of RNA polymerase to specific initiation sites and are then released. The protein is RNA polymerase principal sigma factor HrdD (hrdD) of Streptomyces viridifaciens.